We begin with the raw amino-acid sequence, 406 residues long: Cysteine desulfurase (406 aa).

Lys226 is modified (N6-(pyridoxal phosphate)lysine). The active-site Cysteine persulfide intermediate is the Cys364.

The protein belongs to the class-V pyridoxal-phosphate-dependent aminotransferase family. Csd subfamily. Homodimer. Interacts with SufE and the SufBCD complex composed of SufB, SufC and SufD. The interaction with SufE is required to mediate the direct transfer of the sulfur atom from the S-sulfanylcysteine. The cofactor is pyridoxal 5'-phosphate.

The protein localises to the cytoplasm. It catalyses the reaction (sulfur carrier)-H + L-cysteine = (sulfur carrier)-SH + L-alanine. The enzyme catalyses L-selenocysteine + AH2 = hydrogenselenide + L-alanine + A + H(+). The protein operates within cofactor biosynthesis; iron-sulfur cluster biosynthesis. In terms of biological role, cysteine desulfurases mobilize the sulfur from L-cysteine to yield L-alanine, an essential step in sulfur metabolism for biosynthesis of a variety of sulfur-containing biomolecules. Component of the suf operon, which is activated and required under specific conditions such as oxidative stress and iron limitation. Acts as a potent selenocysteine lyase in vitro, that mobilizes selenium from L-selenocysteine. Selenocysteine lyase activity is however unsure in vivo. This chain is Cysteine desulfurase, found in Shigella sonnei (strain Ss046).